The following is a 229-amino-acid chain: NAD(P)H-quinone oxidoreductase subunit K, chloroplastic (229 aa).

Residues Cys43, Cys44, Cys108, and Cys139 each coordinate [4Fe-4S] cluster.

It belongs to the complex I 20 kDa subunit family. As to quaternary structure, NDH is composed of at least 16 different subunits, 5 of which are encoded in the nucleus. Requires [4Fe-4S] cluster as cofactor.

It localises to the plastid. The protein localises to the chloroplast thylakoid membrane. It catalyses the reaction a plastoquinone + NADH + (n+1) H(+)(in) = a plastoquinol + NAD(+) + n H(+)(out). It carries out the reaction a plastoquinone + NADPH + (n+1) H(+)(in) = a plastoquinol + NADP(+) + n H(+)(out). NDH shuttles electrons from NAD(P)H:plastoquinone, via FMN and iron-sulfur (Fe-S) centers, to quinones in the photosynthetic chain and possibly in a chloroplast respiratory chain. The immediate electron acceptor for the enzyme in this species is believed to be plastoquinone. Couples the redox reaction to proton translocation, and thus conserves the redox energy in a proton gradient. The chain is NAD(P)H-quinone oxidoreductase subunit K, chloroplastic from Aethionema cordifolium (Lebanon stonecress).